Reading from the N-terminus, the 200-residue chain is Riboflavin synthase (200 aa).

Lumazine-binding repeat units follow at residues 1–97 (MFSG…IGGH) and 98–190 (LLSG…VDTV). Residues 4–6 (GII), 48–50 (CLT), 62–67 (DVIPET), 101–103 (GHV), Lys132, 141–143 (SLT), and 155–160 (GLIPET) each bind 2,4-dihydroxypteridine.

Homotrimer.

It catalyses the reaction 2 6,7-dimethyl-8-(1-D-ribityl)lumazine + H(+) = 5-amino-6-(D-ribitylamino)uracil + riboflavin. It functions in the pathway cofactor biosynthesis; riboflavin biosynthesis; riboflavin from 2-hydroxy-3-oxobutyl phosphate and 5-amino-6-(D-ribitylamino)uracil: step 2/2. In terms of biological role, catalyzes the dismutation of two molecules of 6,7-dimethyl-8-ribityllumazine, resulting in the formation of riboflavin and 5-amino-6-(D-ribitylamino)uracil. This is Riboflavin synthase (ribE) from Chlamydia pneumoniae (Chlamydophila pneumoniae).